The primary structure comprises 244 residues: Extracellular superoxide dismutase [Cu-Zn] (244 aa).

A signal peptide spans 1 to 15; that stretch reads MVAFLFCNLLLVACG. Cystine bridges form between cysteine 70–cysteine 215 and cysteine 132–cysteine 214. Residue asparagine 114 is glycosylated (N-linked (GlcNAc...) asparagine). Histidine 121, histidine 123, and histidine 138 together coordinate Cu cation. Histidine 138, histidine 146, histidine 149, and aspartate 152 together coordinate Zn(2+). Histidine 188 provides a ligand contact to Cu cation. The disordered stretch occupies residues 224-244; sequence AWESQTKERKKRRRESECKTT.

The protein belongs to the Cu-Zn superoxide dismutase family. In terms of assembly, homodimer. Interacts with ATP7A; this interaction is copper-dependent and is required for SOD3 activity. Requires Cu cation as cofactor. It depends on Zn(2+) as a cofactor.

Its subcellular location is the secreted. The protein resides in the extracellular space. The protein localises to the golgi apparatus. It is found in the trans-Golgi network. It carries out the reaction 2 superoxide + 2 H(+) = H2O2 + O2. Protect the extracellular space from toxic effect of reactive oxygen intermediates by converting superoxide radicals into hydrogen peroxide and oxygen. This is Extracellular superoxide dismutase [Cu-Zn] (Sod3) from Rattus norvegicus (Rat).